Reading from the N-terminus, the 277-residue chain is Ribosomal RNA small subunit methyltransferase G (277 aa).

S-adenosyl-L-methionine-binding positions include glycine 128, phenylalanine 133, 188–189, and arginine 198; that span reads SE.

This sequence belongs to the methyltransferase superfamily. RNA methyltransferase RsmG family.

The protein localises to the cytoplasm. The catalysed reaction is guanosine(527) in 16S rRNA + S-adenosyl-L-methionine = N(7)-methylguanosine(527) in 16S rRNA + S-adenosyl-L-homocysteine. Specifically methylates the N7 position of guanine in position 527 of 16S rRNA. The sequence is that of Ribosomal RNA small subunit methyltransferase G from Nitrobacter winogradskyi (strain ATCC 25391 / DSM 10237 / CIP 104748 / NCIMB 11846 / Nb-255).